Here is a 384-residue protein sequence, read N- to C-terminus: F-box/kelch-repeat protein At1g64840 (384 aa).

The region spanning 3–51 (PNWSQLPEELLNLISKNLDNCFDVVHARSICRSWRSAFPFPSSLSTLSY) is the F-box domain. 2 Kelch repeats span residues 87–137 (PEYF…PLGF) and 259–309 (NPFP…CCSA).

The chain is F-box/kelch-repeat protein At1g64840 from Arabidopsis thaliana (Mouse-ear cress).